Reading from the N-terminus, the 1805-residue chain is Kinesin-like protein KIF13A (1805 aa).

The region spanning 5 to 352 (KVKVAVRVRP…LRYADRAKRI (348 aa)) is the Kinesin motor domain. Residue 102 to 109 (GQTGSGKS) participates in ATP binding. Residues 359-436 (NEDPNAKVIR…QLESMGISLE (78 aa)) are a coiled coil. Residues 469 to 519 (HTRVGADTSQDIQLFGIGIQPQHCEIDIASDGDVTLTPKENARSCVNGTLV) form the FHA domain. The segment covering 556-567 (EKETGPPEHDLD) has biased composition (basic and acidic residues). Disordered regions lie at residues 556-575 (EKET…ASSE) and 633-656 (QQLS…SQTA). 2 coiled-coil regions span residues 602 to 775 (VQVL…LYGK) and 1100 to 1138 (DALI…EQWV). Ser636 bears the Phosphoserine mark. Ser1287 bears the Phosphoserine mark. The span at 1385 to 1396 (TPNVHNVSSSRP) shows a compositional bias: polar residues. The disordered stretch occupies residues 1385–1404 (TPNVHNVSSSRPDLSGFDED). Residues Ser1454, Ile1481, Ser1490, and Met1494 each carry the phosphoserine modification. The segment at 1507–1531 (PSGSNGSSMPVEHNSKREKKIDSEE) is disordered. Residues 1518–1547 (EHNSKREKKIDSEEEENELEAINRKLISSQ) adopt a coiled-coil conformation. Over residues 1519-1528 (HNSKREKKID) the composition is skewed to basic and acidic residues. Ser1529 and Ser1572 each carry phosphoserine. Residues 1612–1621 (MVVPSSDSSD) are compositionally biased toward low complexity. Residues 1612–1645 (MVVPSSDSSDQLAIQTKDADSTEHSTPSLVHDFR) form a disordered region. A phosphoserine mark is found at Ser1648 and Ser1698. The tract at residues 1749–1779 (GLTDSSAGELSSRRSLPNKTGGKTVSDGLHH) is disordered. A compositionally biased stretch (polar residues) spans 1751 to 1771 (TDSSAGELSSRRSLPNKTGGK).

It belongs to the TRAFAC class myosin-kinesin ATPase superfamily. Kinesin family. Interacts with AP2B1. Interacts with ZFYVE26. Interacts with AP1G1 and AP1G2. Widely expressed, with highest levels in heart, brain and skeletal muscle.

The protein resides in the cytoplasm. It localises to the cytoskeleton. The protein localises to the microtubule organizing center. It is found in the centrosome. Its subcellular location is the midbody. The protein resides in the endosome membrane. It localises to the golgi apparatus membrane. Functionally, plus end-directed microtubule-dependent motor protein involved in intracellular transport and regulating various processes such as mannose-6-phosphate receptor (M6PR) transport to the plasma membrane, endosomal sorting during melanosome biogenesis and cytokinesis. Mediates the transport of M6PR-containing vesicles from trans-Golgi network to the plasma membrane via direct interaction with the AP-1 complex. During melanosome maturation, required for delivering melanogenic enzymes from recycling endosomes to nascent melanosomes by creating peripheral recycling endosomal subdomains in melanocytes. Also required for the abscission step in cytokinesis: mediates translocation of ZFYVE26, and possibly TTC19, to the midbody during cytokinesis. The sequence is that of Kinesin-like protein KIF13A (KIF13A) from Homo sapiens (Human).